The primary structure comprises 241 residues: Small ribosomal subunit protein uS2 (241 aa).

Belongs to the universal ribosomal protein uS2 family.

This is Small ribosomal subunit protein uS2 from Klebsiella pneumoniae (strain 342).